Here is a 226-residue protein sequence, read N- to C-terminus: UPF0758 protein M28_Spy0816 (226 aa).

Positions 103–225 (SVLTSVQVAE…YYSFREKSTL (123 aa)) constitute an MPN domain. Histidine 174, histidine 176, and aspartate 187 together coordinate Zn(2+). A JAMM motif motif is present at residues 174–187 (HNHPSGNIEPSSND).

Belongs to the UPF0758 family.

The sequence is that of UPF0758 protein M28_Spy0816 from Streptococcus pyogenes serotype M28 (strain MGAS6180).